A 105-amino-acid polypeptide reads, in one-letter code: Large ribosomal subunit protein uL24 (105 aa).

The protein belongs to the universal ribosomal protein uL24 family. In terms of assembly, part of the 50S ribosomal subunit.

Its function is as follows. One of two assembly initiator proteins, it binds directly to the 5'-end of the 23S rRNA, where it nucleates assembly of the 50S subunit. In terms of biological role, one of the proteins that surrounds the polypeptide exit tunnel on the outside of the subunit. This Clostridium kluyveri (strain ATCC 8527 / DSM 555 / NBRC 12016 / NCIMB 10680 / K1) protein is Large ribosomal subunit protein uL24.